The following is a 230-amino-acid chain: Cytidylate kinase (230 aa).

11–19 (GQSAAGKST) serves as a coordination point for ATP.

This sequence belongs to the cytidylate kinase family. Type 1 subfamily.

Its subcellular location is the cytoplasm. It catalyses the reaction CMP + ATP = CDP + ADP. The catalysed reaction is dCMP + ATP = dCDP + ADP. The sequence is that of Cytidylate kinase from Chloroflexus aggregans (strain MD-66 / DSM 9485).